A 526-amino-acid polypeptide reads, in one-letter code: Peptide chain release factor 3 (526 aa).

Residues 9-277 enclose the tr-type G domain; sequence DKRRTFAIIS…GIVEWAPIPQ (269 aa). Residues 18–25, 86–90, and 140–143 each bind GTP; these read SHPDAGKT, DTPGH, and NKLD.

The protein belongs to the TRAFAC class translation factor GTPase superfamily. Classic translation factor GTPase family. PrfC subfamily.

It localises to the cytoplasm. In terms of biological role, increases the formation of ribosomal termination complexes and stimulates activities of RF-1 and RF-2. It binds guanine nucleotides and has strong preference for UGA stop codons. It may interact directly with the ribosome. The stimulation of RF-1 and RF-2 is significantly reduced by GTP and GDP, but not by GMP. The chain is Peptide chain release factor 3 from Shewanella halifaxensis (strain HAW-EB4).